The following is an 829-amino-acid chain: 1,4-alpha-glucan branching enzyme GlgB (829 aa).

Residue aspartate 405 is the Nucleophile of the active site. The Proton donor role is filled by glutamate 458. The segment at alanine 758–alanine 829 is disordered. 2 stretches are compositionally biased toward low complexity: residues valine 778–valine 789 and valine 810–threonine 820.

The protein belongs to the glycosyl hydrolase 13 family. GlgB subfamily. Monomer.

The enzyme catalyses Transfers a segment of a (1-&gt;4)-alpha-D-glucan chain to a primary hydroxy group in a similar glucan chain.. It functions in the pathway glycan biosynthesis; glycogen biosynthesis. In terms of biological role, catalyzes the formation of the alpha-1,6-glucosidic linkages in glycogen by scission of a 1,4-alpha-linked oligosaccharide from growing alpha-1,4-glucan chains and the subsequent attachment of the oligosaccharide to the alpha-1,6 position. In Actinobacillus succinogenes (strain ATCC 55618 / DSM 22257 / CCUG 43843 / 130Z), this protein is 1,4-alpha-glucan branching enzyme GlgB.